Reading from the N-terminus, the 976-residue chain is Terminal uridylyltransferase 1 (976 aa).

2 disordered regions span residues 1 to 47 (MVSK…DADF) and 129 to 185 (TGRS…TTEG). A required for oligomerization and may contribute to the incorporation into the MPsome complex region spans residues 1 to 188 (MVSKYHRLLQ…EDDTTEGPRG (188 aa)). A compositionally biased stretch (acidic residues) spans 147–183 (ADDESDGNLDTDGSDASEGDEVESTTDADVYGEDDTT). The segment at 190 to 221 (VRLYSCDACPHAVFTTHAALLAHAEEHHADLL) adopts a C2H2-type; atypical zinc-finger fold. Residues Cys195, Cys198, His212, and His217 each coordinate Zn(2+). Residues Ser298 and 309–312 (ADID) contribute to the UTP site. The Mg(2+) site is built by Asp310 and Asp312. Arg358 contacts RNA. The PAP-associated domain occupies 366 to 425 (ASSPILTVARRDAEDVVARSIRFILNGPATREDRLLLEGSVRDAVGPTGVQQVWWNRTSD). UTP contacts are provided by residues 480–484 (GIRNS), Lys505, Lys509, and 523–524 (SY). Residues 652 to 661 (IEDPYEENLN) carry the Nucleotide recognition motif (NRM) motif. The important for catalytic activity and RNA binding stretch occupies residues 700 to 976 (DSSGTPAAGG…SKVTPFKSPR (277 aa)). Residues 732–755 (SESRRLPQSNSDNSGRIANGDNES) form a disordered region.

It belongs to the DNA polymerase type-B-like family. Oligomer. Component of the mitochondrial 3' processome (MPsome) complex composed at least of terminal uridylyltransferase KRET1/TUT1, 3'-5' exonuclease DSS1, MPSS1, MPSS2 and MPSS3. Within the complex, interacts with DSS1, MPSS1 and MPSS3. Mg(2+) is required as a cofactor. Mn(2+) serves as cofactor.

The protein resides in the mitochondrion. The catalysed reaction is RNA(n) + UTP = RNA(n)-3'-uridine ribonucleotide + diphosphate. Terminal uridylyltransferase which is involved in the post-transcriptional editing of mitochondrial RNA, a process involving the addition and deletion of uridine (U) nucleotides in the pre-RNA. Specifically, catalyzes the addition of Us to the 3'-hydroxyl group of guided RNA (gRNA), ribosomal RNA (rRNA) and some mRNAs. As part of the mitochondrial 3' processome (MPsome), catalyzes the primary 3' uridylation of gRNA precursors to facilitate their recognition and to induce their processive 3'-5' degradation by DSS1, and the secondary 3' uridylation of mature gRNAs. Involved in the 3' uridylylation of the long A/U tail of some edited and never-edited mRNAs. Promotes 3' uridylylation-mediated decay of some never-edited mRNAs. Does not mediate RNA-independent UTP polymerization. The chain is Terminal uridylyltransferase 1 from Trypanosoma brucei brucei.